The chain runs to 350 residues: MGQKVNPHGFRLGITSEFTSRWYADKQYKAYVGEDVKIRKMMSRGMERAGISRVDIERTQGRLRVDIHTARPGIVIGRRGAEADRIRGDLEKLTGKQVQLNILEVKNPEVDAQLVAQGVAEQLSSRVSFRRAMRKAMQTAMKGGAKGIRVQCSGRLGGAEMSRSEFYREGRVPLHTLRADIDYGFYEARTNFGRIGVKVWIYKGDIVQSRAEREAQEALQRQTRRDRPRRGPRSGSSGTTQGGTDAGRAAARSERRGRGGNAPAAETAASEAGATESTAPESTAPESTAPESTAPESTAPESTAPETTAPEAASSPAPAAESTAPATAASESAATPAAAATPGTPEKAEE.

The KH type-2 domain maps to 38–106; the sequence is IRKMMSRGME…QVQLNILEVK (69 aa). The segment at 211 to 350 is disordered; the sequence is AEREAQEALQ…TPGTPEKAEE (140 aa). Residues 222–232 show a composition bias toward basic residues; sequence QTRRDRPRRGP. Residues 261–350 show a composition bias toward low complexity; the sequence is NAPAAETAAS…TPGTPEKAEE (90 aa).

The protein belongs to the universal ribosomal protein uS3 family. Part of the 30S ribosomal subunit. Forms a tight complex with proteins S10 and S14.

Functionally, binds the lower part of the 30S subunit head. Binds mRNA in the 70S ribosome, positioning it for translation. In Frankia alni (strain DSM 45986 / CECT 9034 / ACN14a), this protein is Small ribosomal subunit protein uS3.